A 223-amino-acid chain; its full sequence is Sigma non-opioid intracellular receptor 1 (223 aa).

The Lumenal portion of the chain corresponds to 1 to 9 (MQWAAGRRW). Residues 2–8 (QWAAGRR) are targeting to endoplasmic reticulum-associated lipid droplets. The chain crosses the membrane as a helical span at residues 10-30 (AWITLFLTIVAVLIQAVWLWL). Residues 31-223 (GTQSFVFQRE…LTTYLFGQDS (193 aa)) lie on the Cytoplasmic side of the membrane. Positions 99–106 (SLSEYVLL) are important for ligand-binding. The interval 177 to 223 (VIPSTLAFALSDTIFSTQDFLTLFYTLRAYARGLRLELTTYLFGQDS) is C-terminal hydrophobic region.

Belongs to the ERG2 family. In terms of assembly, homotrimer. Forms a ternary complex with ANK2 and ITPR3. The complex is disrupted by agonists. Interacts with KCNA4. Interacts with KCNA2; cocaine consumption leads to increased interaction. Interacts with RNF112 in an oxidative stress-regulated manner.

The protein localises to the nucleus inner membrane. The protein resides in the nucleus outer membrane. It is found in the nucleus envelope. It localises to the cytoplasmic vesicle. Its subcellular location is the endoplasmic reticulum membrane. The protein localises to the membrane. The protein resides in the lipid droplet. It is found in the cell junction. It localises to the cell membrane. Its subcellular location is the cell projection. The protein localises to the growth cone. The protein resides in the postsynaptic density membrane. Functionally, functions in lipid transport from the endoplasmic reticulum and is involved in a wide array of cellular functions probably through regulation of the biogenesis of lipid microdomains at the plasma membrane. Involved in the regulation of different receptors it plays a role in BDNF signaling and EGF signaling. Also regulates ion channels like the potassium channel and could modulate neurotransmitter release. Plays a role in calcium signaling through modulation together with ANK2 of the ITP3R-dependent calcium efflux at the endoplasmic reticulum. Plays a role in several other cell functions including proliferation, survival and death. Originally identified for its ability to bind various psychoactive drugs it is involved in learning processes, memory and mood alteration. Necessary for proper mitochondrial axonal transport in motor neurons, in particular the retrograde movement of mitochondria. Plays a role in protecting cells against oxidative stress-induced cell death via its interaction with RNF112. This Trichosurus vulpecula (Brush-tailed possum) protein is Sigma non-opioid intracellular receptor 1 (SIGMAR1).